The chain runs to 29 residues: Glucagon (29 aa).

Belongs to the glucagon family.

Its subcellular location is the secreted. In terms of biological role, glucagon plays a key role in glucose metabolism and homeostasis. Regulates blood glucose by increasing gluconeogenesis and decreasing glycolysis. This Lampetra fluviatilis (European river lamprey) protein is Glucagon (gcg).